We begin with the raw amino-acid sequence, 469 residues long: tRNA(Ile)-lysidine synthase (469 aa).

26-31 (SGGPDS) lines the ATP pocket.

This sequence belongs to the tRNA(Ile)-lysidine synthase family.

The protein resides in the cytoplasm. It catalyses the reaction cytidine(34) in tRNA(Ile2) + L-lysine + ATP = lysidine(34) in tRNA(Ile2) + AMP + diphosphate + H(+). Its function is as follows. Ligates lysine onto the cytidine present at position 34 of the AUA codon-specific tRNA(Ile) that contains the anticodon CAU, in an ATP-dependent manner. Cytidine is converted to lysidine, thus changing the amino acid specificity of the tRNA from methionine to isoleucine. This is tRNA(Ile)-lysidine synthase from Clostridium perfringens (strain 13 / Type A).